The sequence spans 124 residues: Small polypeptide ROTUNDIFOLIA LIKE 3 (124 aa).

Positions 1–23 (MEDERWKLSSSKGRSKSGRSCSS) are disordered. N-linked (GlcNAc...) asparagine glycans are attached at residues Asn-35 and Asn-38. The chain crosses the membrane as a helical span at residues 59–75 (AWSAAGAGGGGASSSSS). A disordered region spans residues 60-95 (WSAAGAGGGGASSSSSSQHQHQQQQQQSNNSQRLSK). The span at 71 to 91 (SSSSSSQHQHQQQQQQSNNSQ) shows a compositional bias: low complexity. N-linked (GlcNAc...) asparagine glycosylation occurs at Asn-88. Residues 92 to 124 (RLSKKCVEAVKEHRARFYIVRRCVSMLVCWRDY) form a required for DVL/RTFL small polypeptide activity region.

Belongs to the DVL/RTFL small polypeptides family.

The protein localises to the cell membrane. Functionally, small polypeptide acting as a regulatory molecule which coordinates cellular responses required for differentiation, growth and development, probably by restricting polar cell proliferation in lateral organs (e.g. leaves and petioles). This Oryza sativa subsp. japonica (Rice) protein is Small polypeptide ROTUNDIFOLIA LIKE 3.